Reading from the N-terminus, the 508-residue chain is Endo-4-O-sulfatase (508 aa).

S84 carries the post-translational modification 3-oxoalanine (Ser).

The protein belongs to the sulfatase family. Post-translationally, the conversion to 3-oxoalanine (also known as C-formylglycine, FGly), of a serine or cysteine residue in prokaryotes and of a cysteine residue in eukaryotes, is critical for catalytic activity.

Endosulfatase involved in the degradation of the glycosaminoglycans (GAGs) chondroitin sulfate (CS) and dermatan sulfate (DS). Efficiently hydrolyzes sulfate groups from a broad range of substrate size, including disaccharide to high molecular weight CS and DS polymers. Has a strict specificity for the 4-O-sulfate groups of galactosamine. GAG-specific sulfatases play a key role in the persistence of the major human gut symbiont B.thetaiotaomicron in the host gastrointestinal tract. This Bacteroides thetaiotaomicron (strain ATCC 29148 / DSM 2079 / JCM 5827 / CCUG 10774 / NCTC 10582 / VPI-5482 / E50) protein is Endo-4-O-sulfatase.